Consider the following 213-residue polypeptide: Adenylate kinase (213 aa).

10-15 (GSGKGT) is a binding site for ATP. Residues 30-59 (STGDLFRTNIENDTPLGKEIKQIVENGQLV) form an NMP region. AMP contacts are provided by residues Thr-31, Arg-36, 57–59 (QLV), 85–88 (GFPR), and Gln-92. The interval 121-158 (GRRICQSCCKIFNIYTLPTKEKEICDFCQGILYQRKDD) is LID. Arg-122 contributes to the ATP binding site. Positions 125 and 128 each coordinate Zn(2+). An ATP-binding site is contributed by 131–132 (IF). Zn(2+)-binding residues include Cys-145 and Cys-148. 2 residues coordinate AMP: Arg-155 and Arg-166. ATP is bound at residue Lys-194.

Belongs to the adenylate kinase family. In terms of assembly, monomer.

The protein resides in the cytoplasm. It carries out the reaction AMP + ATP = 2 ADP. It participates in purine metabolism; AMP biosynthesis via salvage pathway; AMP from ADP: step 1/1. Functionally, catalyzes the reversible transfer of the terminal phosphate group between ATP and AMP. Plays an important role in cellular energy homeostasis and in adenine nucleotide metabolism. This Borrelia duttonii (strain Ly) protein is Adenylate kinase.